The following is a 574-amino-acid chain: K(+)/H(+) antiporter NhaP2 (574 aa).

13 consecutive transmembrane segments (helical) span residues Ile6–Met26, Ile34–Leu54, Tyr58–Met78, Val87–Thr107, Val109–Val129, Ile173–Ile193, Phe196–Val216, Leu219–Ser239, Leu242–Thr262, Val271–Leu291, Ile299–Val319, Trp335–Met355, and Leu359–Val379. The RCK C-terminal domain occupies Ser405–Gln486.

The protein belongs to the monovalent cation:proton antiporter 1 (CPA1) transporter (TC 2.A.36) family. NhaP2 subfamily.

The protein localises to the cell inner membrane. The catalysed reaction is K(+)(in) + H(+)(out) = K(+)(out) + H(+)(in). Its function is as follows. K(+)/H(+) antiporter that extrudes potassium in exchange for external protons and maintains the internal concentration of potassium under toxic levels. The chain is K(+)/H(+) antiporter NhaP2 from Shewanella oneidensis (strain ATCC 700550 / JCM 31522 / CIP 106686 / LMG 19005 / NCIMB 14063 / MR-1).